A 291-amino-acid chain; its full sequence is Tobamovirus multiplication protein 1 (291 aa).

At 1–3 (MTD) the chain is on the cytoplasmic side. The chain crosses the membrane as a helical span at residues 4–24 (SGLMMPAEIAGILTTAITSWW). The Extracellular segment spans residues 25-36 (DDVNESTQWQDG). Residue Asn-28 is glycosylated (N-linked (GlcNAc...) asparagine). Residues 37–57 (IFFALCGAYALVSAVALVQLI) form a helical membrane-spanning segment. Topologically, residues 58 to 78 (RIQMRVPEYGWTTQKVFHLMN) are cytoplasmic. The helical transmembrane segment at 79-99 (FVVNGVRAVLFGFHMQVFLVH) threads the bilayer. Over 100–104 (PKALC) the chain is Extracellular. The chain crosses the membrane as a helical span at residues 105–125 (WVLLDLPGLLFFSAYTLLVLF). The Cytoplasmic segment spans residues 126–144 (WAEIYHQARSLPTDKLRIT). Residues 145–165 (YISVNVAVYLAQIGIWAYIWV) form a helical membrane-spanning segment. At 166–172 (HDNSTVE) the chain is on the extracellular side. Asn-168 carries an N-linked (GlcNAc...) asparagine glycan. The helical transmembrane segment at 173 to 193 (LVGKIFIAVVSFIAALGFLLY) threads the bilayer. Over 194 to 220 (GGRLFFMLRRFPIESKGRRKKLHEVGS) the chain is Cytoplasmic. The chain crosses the membrane as a helical span at residues 221–241 (VTAICFTCFLIRCVVVAVSAF). The Extracellular portion of the chain corresponds to 242 to 253 (DKDLTLDVLDHP). The chain crosses the membrane as a helical span at residues 254-274 (VLNLIYYMVVEVLPSALVLFI). The Cytoplasmic portion of the chain corresponds to 275 to 291 (LRKLPPKRVSAQYHPIQ).

The protein belongs to the plant tobamovirus multiplication TOM1 protein family. In terms of assembly, constituent of tobamovirus replication complex. Interacts with TOM2A and with the helicase domain of tobamovirus-encoded replication proteins.

The protein resides in the vacuole membrane. Necessary for the efficient intracellular multiplication of tobamoviruses, probably being a membrane anchor promoting the formation of the replication complex. The sequence is that of Tobamovirus multiplication protein 1 (TOM1) from Arabidopsis thaliana (Mouse-ear cress).